The primary structure comprises 367 residues: Glutamate 5-kinase (367 aa).

Residue K8 coordinates ATP. Residues S49, D136, and N148 each coordinate substrate. Residues 168-169 and 210-216 each bind ATP; these read TD and TGGMVTK. The PUA domain occupies 275 to 353; sequence AGKLYLDEGA…REISTILGYA (79 aa).

The protein belongs to the glutamate 5-kinase family.

The protein resides in the cytoplasm. It catalyses the reaction L-glutamate + ATP = L-glutamyl 5-phosphate + ADP. The protein operates within amino-acid biosynthesis; L-proline biosynthesis; L-glutamate 5-semialdehyde from L-glutamate: step 1/2. Its function is as follows. Catalyzes the transfer of a phosphate group to glutamate to form L-glutamate 5-phosphate. This is Glutamate 5-kinase from Nostoc punctiforme (strain ATCC 29133 / PCC 73102).